A 1004-amino-acid chain; its full sequence is Outer cell wall protein (1004 aa).

An N-terminal signal peptide occupies residues 1-24 (MNKKVVLSVLSTTLVASVAASAFA).

The outer cell wall layer is composed of subunits of the outer cell wall protein. These proteins form a hexagonal array with a lattice constant of 14.5 nm in the outer cell wall layers.

Its subcellular location is the secreted. The protein localises to the cell wall. It is found in the S-layer. The outer wall protein binds to the middle cell wall protein. The sequence is that of Outer cell wall protein from Brevibacillus brevis (strain 47 / JCM 6285 / NBRC 100599).